The following is a 352-amino-acid chain: MIVLFVDFDYFYAQVEEVLNPSLKGKPVVVCVFSGRFEDSGAVATANYEARKFGVKAGIPIVEAKKILPNAVYLPMRKEVYQQVSSRIMNLLREYSEKIEIASIDEAYLDISDKVRDYREAYNLGLEIKNKILEKEKITVTVGISKNKVFAKIAADMAKPNGIKVIDDEEVKRLIRELDIADVPGIGNITAEKLKKLGINKLVDTLSIEFDKLKGMIGEAKAKYLISLARDEYNEPIRTRVRKSIGRIVTMKRNSRNLEEIKPYLFRAIEESYYKLDKRIPKAIHVVAVTEDLDIVSRGRTFPHGISKETAYSESVKLLQKILEEDERKIRRIGVRFSKFIEAIGLDKFFDT.

The 185-residue stretch at valine 3 to glycine 187 folds into the UmuC domain. Aspartate 7 and aspartate 105 together coordinate Mg(2+). The active site involves glutamate 106.

The protein belongs to the DNA polymerase type-Y family. As to quaternary structure, monomer. Interacts with the PCNA heterotrimer via PCNA1. Requires Mg(2+) as cofactor.

It localises to the cytoplasm. The catalysed reaction is DNA(n) + a 2'-deoxyribonucleoside 5'-triphosphate = DNA(n+1) + diphosphate. In terms of biological role, poorly processive, error-prone DNA polymerase involved in untargeted mutagenesis. Copies undamaged DNA at stalled replication forks, which arise in vivo from mismatched or misaligned primer ends. These misaligned primers can be extended by PolIV. Exhibits no 3'-5' exonuclease (proofreading) activity. It is involved in translesional synthesis. This Saccharolobus solfataricus (strain ATCC 35092 / DSM 1617 / JCM 11322 / P2) (Sulfolobus solfataricus) protein is DNA polymerase IV (dbh).